Reading from the N-terminus, the 384-residue chain is Putative D-galactosamine-6-phosphate deaminase AgaS (384 aa).

2 SIS domains span residues 45–197 (LEPL…SQTF) and 215–364 (SEGV…PDTP).

The protein belongs to the SIS family. AgaS subfamily.

The enzyme catalyses D-galactosamine 6-phosphate + H2O = D-tagatopyranose 1-phosphate + NH4(+). In terms of biological role, catalyzes the isomerization-deamination of galactosamine 6-phosphate to form tagatofuranose 6-phosphate and ammonium ion. This Escherichia coli (strain K12) protein is Putative D-galactosamine-6-phosphate deaminase AgaS (agaS).